The chain runs to 260 residues: Ribonuclease PH (260 aa).

Phosphate contacts are provided by residues Arg-88 and 126–128 (GTR).

This sequence belongs to the RNase PH family. As to quaternary structure, homohexameric ring arranged as a trimer of dimers.

The catalysed reaction is tRNA(n+1) + phosphate = tRNA(n) + a ribonucleoside 5'-diphosphate. Its function is as follows. Phosphorolytic 3'-5' exoribonuclease that plays an important role in tRNA 3'-end maturation. Removes nucleotide residues following the 3'-CCA terminus of tRNAs; can also add nucleotides to the ends of RNA molecules by using nucleoside diphosphates as substrates, but this may not be physiologically important. Probably plays a role in initiation of 16S rRNA degradation (leading to ribosome degradation) during starvation. In Mycobacterium sp. (strain JLS), this protein is Ribonuclease PH.